The following is a 301-amino-acid chain: MQKYDIKTFQGLILALQDYWARQGCVIIQPLDMEVGAGTFHPMTFLRSLGPEPMSSAYVQPCRRPTDGRYGENPNRLQHYYQFQVMLKPSPDNIQELYLGSLKELGFDPLVHDIRFVEDNWESPTLGAWGLGWEVWLNGMEVTQFTYFQQVGGIECKPVTGEITYGLERLAMYVQGVDSIYDLVWTDGPMGKVTYGDVFHQNEVEQSTYNFEHANVEALFRTFDECEAESKKLIENSLPLPAYEQVMKASHAFNLLDARHAISVTERQRYILRVRTLAKACAESYYQAREALGFPLCNKEA.

The protein belongs to the class-II aminoacyl-tRNA synthetase family. As to quaternary structure, tetramer of two alpha and two beta subunits.

Its subcellular location is the cytoplasm. The enzyme catalyses tRNA(Gly) + glycine + ATP = glycyl-tRNA(Gly) + AMP + diphosphate. In Alteromonas mediterranea (strain DSM 17117 / CIP 110805 / LMG 28347 / Deep ecotype), this protein is Glycine--tRNA ligase alpha subunit.